A 485-amino-acid chain; its full sequence is Expansin-like protein 8 (485 aa).

The N-terminal stretch at 1–21 is a signal peptide; that stretch reads MRISIILLSLLFLSLHSLIKA. Topologically, residues 22–464 are extracellular; sequence DITKLSVCGS…QSGHHASSNT (443 aa). In terms of domain architecture, Expansin-like EG45 spans 26 to 139; it reads LSVCGSARAV…QIVSCGYSGN (114 aa). 2 disulfides stabilise this stretch: cysteine 29-cysteine 70 and cysteine 73-cysteine 134. Asparagine 117 and asparagine 365 each carry an N-linked (GlcNAc...) asparagine glycan. The interval 408 to 436 is disordered; the sequence is EVNNKPSTTSGTGTTSSKPSSSSGGVSGG. Positions 414–431 are enriched in low complexity; it reads STTSGTGTTSSKPSSSSG. Asparagine 454 carries an N-linked (GlcNAc...) asparagine glycan. A helical transmembrane segment spans residues 465 to 485; sequence NILLPTTFVFFISITILSLLF.

The protein belongs to the expansin family. Expansin A subfamily.

It localises to the membrane. Its function is as follows. May serve to lubricate the movement of the cellulose microfibrils during cell growth and wall extension and/or may serve to maintain the fluid state of the slug cell wall. The sequence is that of Expansin-like protein 8 (expl8) from Dictyostelium discoideum (Social amoeba).